The chain runs to 135 residues: Putative pre-16S rRNA nuclease (135 aa).

It belongs to the YqgF nuclease family.

The protein resides in the cytoplasm. Its function is as follows. Could be a nuclease involved in processing of the 5'-end of pre-16S rRNA. In Christiangramia forsetii (strain DSM 17595 / CGMCC 1.15422 / KT0803) (Gramella forsetii), this protein is Putative pre-16S rRNA nuclease.